A 168-amino-acid chain; its full sequence is INO80 complex subunit 3 (168 aa).

A compositionally biased stretch (polar residues) spans 115–129 (TNSTLSTPKSFHSPL). Positions 115–168 (TNSTLSTPKSFHSPLQSRGISPSSAQSSAAVSSSRKQKRKRTSEGPSERRARKK) are disordered. The span at 130–148 (QSRGISPSSAQSSAAVSSS) shows a compositional bias: low complexity. Positions 156-168 (TSEGPSERRARKK) are enriched in basic and acidic residues.

In terms of assembly, component of the INO80 chromatin remodeling complex.

It localises to the nucleus. Component of the INO80 complex which remodels chromatin by shifting nucleosomes and is involved in DNA repair. This is INO80 complex subunit 3 (iec3) from Schizosaccharomyces pombe (strain 972 / ATCC 24843) (Fission yeast).